Consider the following 535-residue polypeptide: Phosphoenolpyruvate carboxykinase (ATP) (535 aa).

The substrate site is built by Arg59, Tyr201, and Lys207. ATP-binding positions include Lys207, His226, and 243 to 251; that span reads GLSGTGKTT. Mn(2+) is bound by residues Lys207 and His226. Asp264 lines the Mn(2+) pocket. Residues Glu292, Arg328, 444–445, and Thr450 contribute to the ATP site; that span reads RI. Arg328 is a substrate binding site.

The protein belongs to the phosphoenolpyruvate carboxykinase (ATP) family. Mn(2+) is required as a cofactor.

It localises to the cytoplasm. The enzyme catalyses oxaloacetate + ATP = phosphoenolpyruvate + ADP + CO2. The protein operates within carbohydrate biosynthesis; gluconeogenesis. Functionally, involved in the gluconeogenesis. Catalyzes the conversion of oxaloacetate (OAA) to phosphoenolpyruvate (PEP) through direct phosphoryl transfer between the nucleoside triphosphate and OAA. The polypeptide is Phosphoenolpyruvate carboxykinase (ATP) (Bacteroides thetaiotaomicron (strain ATCC 29148 / DSM 2079 / JCM 5827 / CCUG 10774 / NCTC 10582 / VPI-5482 / E50)).